A 179-amino-acid polypeptide reads, in one-letter code: Serglycin (179 aa).

The signal sequence occupies residues 1–26; sequence MRQVPVGTRLVLALAFVLVWGSSVQG. Positions 27-75 are cleaved as a propeptide — activation peptide; that stretch reads YPARRARYQWVRCKPDGIFANCIEEKGPRFDLIAEESNVGPPMTDPVLM. Cysteines 39 and 48 form a disulfide. Residues 86–145 form a disordered region; that stretch reads SDDYSGSGSGSGSGSGSGSGSGSGSGSGSGSGSGSGSGSGSGSGSGSGSGSGSLADMEWE. 2 O-linked (Xyl...) (glycosaminoglycan) serine glycosylation sites follow: S90 and S92. 24 consecutive repeat copies span residues 90 to 91, 92 to 93, 94 to 95, 96 to 97, 98 to 99, 100 to 101, 102 to 103, 104 to 105, 106 to 107, 108 to 109, 110 to 111, 112 to 113, 114 to 115, 116 to 117, 118 to 119, 120 to 121, 122 to 123, 124 to 125, 126 to 127, 128 to 129, 130 to 131, 132 to 133, 134 to 135, and 136 to 137. The interval 90–137 is 24 X 2 AA tandem repeats of S-G; sequence SGSGSGSGSGSGSGSGSGSGSGSGSGSGSGSGSGSGSGSGSGSGSGSG. The segment covering 92–136 has biased composition (gly residues); that stretch reads SGSGSGSGSGSGSGSGSGSGSGSGSGSGSGSGSGSGSGSGSGSGS. 6 O-linked (Xyl...) (glycosaminoglycan) serine glycosylation sites follow: S96, S98, S100, S102, S104, and S106.

It belongs to the serglycin family. As to quaternary structure, binds to activated CD44 and to GZMB. O-glycosylated; contains chondroitin sulfate and heparan sulfate.

The protein localises to the cytoplasmic granule. Its subcellular location is the cytolytic granule. The protein resides in the secreted. It is found in the extracellular space. It localises to the golgi apparatus. Plays a role in formation of mast cell secretory granules and mediates storage of various compounds in secretory vesicles. Required for storage of some proteases in both connective tissue and mucosal mast cells and for storage of granzyme B in T-lymphocytes. Plays a role in localizing neutrophil elastase in azurophil granules of neutrophils. Mediates processing of MMP2. Plays a role in cytotoxic cell granule-mediated apoptosis by forming a complex with granzyme B which is delivered to cells by perforin to induce apoptosis. Regulates the secretion of TNF-alpha and may also regulate protease secretion. Inhibits bone mineralization. This is Serglycin (Srgn) from Rattus norvegicus (Rat).